The following is a 68-amino-acid chain: ATP synthase F(0) complex subunit 8 (68 aa).

Residues 8–24 (TWFTIIMAMLPTLYLIT) form a helical membrane-spanning segment. Position 54 is an N6-acetyllysine; alternate (lysine 54). Lysine 54 bears the N6-succinyllysine; alternate mark. An N6-acetyllysine modification is found at lysine 57.

The protein belongs to the ATPase protein 8 family. As to quaternary structure, component of the ATP synthase complex composed at least of ATP5F1A/subunit alpha, ATP5F1B/subunit beta, ATP5MC1/subunit c (homooctomer), MT-ATP6/subunit a, MT-ATP8/subunit 8, ATP5ME/subunit e, ATP5MF/subunit f, ATP5MG/subunit g, ATP5MK/subunit k, ATP5MJ/subunit j, ATP5F1C/subunit gamma, ATP5F1D/subunit delta, ATP5F1E/subunit epsilon, ATP5PF/subunit F6, ATP5PB/subunit b, ATP5PD/subunit d, ATP5PO/subunit OSCP. ATP synthase complex consists of a soluble F(1) head domain (subunits alpha(3) and beta(3)) - the catalytic core - and a membrane F(0) domain - the membrane proton channel (subunits c, a, 8, e, f, g, k and j). These two domains are linked by a central stalk (subunits gamma, delta, and epsilon) rotating inside the F1 region and a stationary peripheral stalk (subunits F6, b, d, and OSCP). Interacts with PRICKLE3.

The protein localises to the mitochondrion membrane. Subunit 8, of the mitochondrial membrane ATP synthase complex (F(1)F(0) ATP synthase or Complex V) that produces ATP from ADP in the presence of a proton gradient across the membrane which is generated by electron transport complexes of the respiratory chain. ATP synthase complex consist of a soluble F(1) head domain - the catalytic core - and a membrane F(1) domain - the membrane proton channel. These two domains are linked by a central stalk rotating inside the F(1) region and a stationary peripheral stalk. During catalysis, ATP synthesis in the catalytic domain of F(1) is coupled via a rotary mechanism of the central stalk subunits to proton translocation. In vivo, can only synthesize ATP although its ATP hydrolase activity can be activated artificially in vitro. Part of the complex F(0) domain. The protein is ATP synthase F(0) complex subunit 8 of Papio hamadryas (Hamadryas baboon).